Here is a 620-residue protein sequence, read N- to C-terminus: Acetylcholinesterase 1 (620 aa).

The signal sequence occupies residues 1–31; sequence MRYSLLFFIFLPCVITAVDLIHLHDGSPLFG. N-linked (GlcNAc...) asparagine glycosylation occurs at N74. C82 and C109 form a disulfide bridge. S216 serves as the catalytic Acyl-ester intermediate. A disulfide bond links C270 and C286. A glycan (N-linked (GlcNAc...) asparagine) is linked at N272. Active-site charge relay system residues include E346 and H468. A disulfide bond links C430 and C558. 2 N-linked (GlcNAc...) asparagine glycosylation sites follow: N486 and N536.

The protein belongs to the type-B carboxylesterase/lipase family. As to quaternary structure, oligomer composed of disulfide-linked homodimers.

The protein resides in the synapse. Its subcellular location is the secreted. It localises to the cell membrane. The enzyme catalyses acetylcholine + H2O = choline + acetate + H(+). In terms of biological role, rapidly hydrolyzes choline released into the synapse. The polypeptide is Acetylcholinesterase 1 (ace-1) (Caenorhabditis briggsae).